Here is a 545-residue protein sequence, read N- to C-terminus: ATP synthase subunit alpha (545 aa).

173 to 180 is a binding site for ATP; that stretch reads GDRQTGKS.

The protein belongs to the ATPase alpha/beta chains family. In terms of assembly, F-type ATPases have 2 components, CF(1) - the catalytic core - and CF(0) - the membrane proton channel. CF(1) has five subunits: alpha(3), beta(3), gamma(1), delta(1), epsilon(1). CF(0) has three main subunits: a(1), b(2) and c(9-12). The alpha and beta chains form an alternating ring which encloses part of the gamma chain. CF(1) is attached to CF(0) by a central stalk formed by the gamma and epsilon chains, while a peripheral stalk is formed by the delta and b chains.

It is found in the cell membrane. The enzyme catalyses ATP + H2O + 4 H(+)(in) = ADP + phosphate + 5 H(+)(out). In terms of biological role, produces ATP from ADP in the presence of a proton gradient across the membrane. The alpha chain is a regulatory subunit. This Pseudarthrobacter chlorophenolicus (strain ATCC 700700 / DSM 12829 / CIP 107037 / JCM 12360 / KCTC 9906 / NCIMB 13794 / A6) (Arthrobacter chlorophenolicus) protein is ATP synthase subunit alpha.